An 808-amino-acid chain; its full sequence is DNA ligase (808 aa).

The interval M1–P30 is disordered. Residues P18 to P30 show a composition bias toward low complexity. NAD(+) contacts are provided by residues D61–D65, S110–L111, and D141. K143 functions as the N6-AMP-lysine intermediate in the catalytic mechanism. Residues R164, E202, K334, and K358 each contribute to the NAD(+) site. Positions 453, 456, 471, and 476 each coordinate Zn(2+). In terms of domain architecture, BRCT spans E644–G733. The tract at residues L720 to L808 is disordered. A compositionally biased stretch (acidic residues) spans V727 to P742. The segment covering A746–G773 has biased composition (low complexity). The segment covering D779–S792 has biased composition (basic and acidic residues).

It belongs to the NAD-dependent DNA ligase family. LigA subfamily. The cofactor is Mg(2+). Mn(2+) is required as a cofactor.

It catalyses the reaction NAD(+) + (deoxyribonucleotide)n-3'-hydroxyl + 5'-phospho-(deoxyribonucleotide)m = (deoxyribonucleotide)n+m + AMP + beta-nicotinamide D-nucleotide.. Functionally, DNA ligase that catalyzes the formation of phosphodiester linkages between 5'-phosphoryl and 3'-hydroxyl groups in double-stranded DNA using NAD as a coenzyme and as the energy source for the reaction. It is essential for DNA replication and repair of damaged DNA. In Nitratidesulfovibrio vulgaris (strain DSM 19637 / Miyazaki F) (Desulfovibrio vulgaris), this protein is DNA ligase.